Reading from the N-terminus, the 248-residue chain is UPF0246 protein RAF_ORF0648 (248 aa).

The protein belongs to the UPF0246 family.

This chain is UPF0246 protein RAF_ORF0648, found in Rickettsia africae (strain ESF-5).